Here is an 832-residue protein sequence, read N- to C-terminus: Cadherin-17 (832 aa).

A signal peptide spans 1 to 22; that stretch reads MILQAHLHSLCLLMLYLATGYG. Residues 23-787 are Extracellular-facing; it reads QEGKFSGPLK…HQTGIPTVGM (765 aa). Cadherin domains lie at 30-128, 129-244, 245-340, 341-449, 450-566, 567-667, and 668-777; these read PLKP…TFLQ, SKYE…APKP, VEMV…PPTC, PSPV…IPIF, EKSD…APQF, SQHV…PPRL, and AKDY…RPAG. Residues asparagine 149, asparagine 184, asparagine 250, asparagine 419, asparagine 456, asparagine 546, asparagine 587, and asparagine 722 are each glycosylated (N-linked (GlcNAc...) asparagine). Residues 788 to 808 traverse the membrane as a helical segment; sequence AVGILLTTLLVIGIILAVVFI. Residues 809–832 lie on the Cytoplasmic side of the membrane; the sequence is RIKKDKGKDNVESAQASEVKPLRS.

Expressed in the gastrointestinal tract and pancreatic duct. Not detected in kidney, lung, liver, brain, adrenal gland and skin.

It localises to the cell membrane. In terms of biological role, cadherins are calcium-dependent cell adhesion proteins. They preferentially interact with themselves in a homophilic manner in connecting cells; cadherins may thus contribute to the sorting of heterogeneous cell types. LI-cadherin may have a role in the morphological organization of liver and intestine. Involved in intestinal peptide transport. This Homo sapiens (Human) protein is Cadherin-17 (CDH17).